Consider the following 443-residue polypeptide: Ribulose bisphosphate carboxylase large chain (443 aa).

The substrate site is built by Asn-89 and Thr-139. The Proton acceptor role is filled by Lys-141. Substrate is bound at residue Lys-143. Mg(2+) contacts are provided by Lys-167, Asp-169, and Glu-170. N6-carboxylysine is present on Lys-167. Catalysis depends on His-260, which acts as the Proton acceptor. Substrate is bound by residues Arg-261, His-293, and Ser-345.

The protein belongs to the RuBisCO large chain family. Type I subfamily. Heterohexadecamer of 8 large chains and 8 small chains; disulfide-linked. The disulfide link is formed within the large subunit homodimers. The cofactor is Mg(2+). Post-translationally, the disulfide bond which can form in the large chain dimeric partners within the hexadecamer appears to be associated with oxidative stress and protein turnover.

The protein resides in the plastid. It is found in the chloroplast. It catalyses the reaction 2 (2R)-3-phosphoglycerate + 2 H(+) = D-ribulose 1,5-bisphosphate + CO2 + H2O. It carries out the reaction D-ribulose 1,5-bisphosphate + O2 = 2-phosphoglycolate + (2R)-3-phosphoglycerate + 2 H(+). Its function is as follows. RuBisCO catalyzes two reactions: the carboxylation of D-ribulose 1,5-bisphosphate, the primary event in carbon dioxide fixation, as well as the oxidative fragmentation of the pentose substrate in the photorespiration process. Both reactions occur simultaneously and in competition at the same active site. This is Ribulose bisphosphate carboxylase large chain from Antirrhinum majus (Garden snapdragon).